A 308-amino-acid polypeptide reads, in one-letter code: Ribosomal RNA small subunit methyltransferase H (308 aa).

S-adenosyl-L-methionine is bound by residues 31-33 (GGH), Asp-51, Phe-75, Asp-97, and Gln-104.

The protein belongs to the methyltransferase superfamily. RsmH family.

It is found in the cytoplasm. The enzyme catalyses cytidine(1402) in 16S rRNA + S-adenosyl-L-methionine = N(4)-methylcytidine(1402) in 16S rRNA + S-adenosyl-L-homocysteine + H(+). Specifically methylates the N4 position of cytidine in position 1402 (C1402) of 16S rRNA. In Tolumonas auensis (strain DSM 9187 / NBRC 110442 / TA 4), this protein is Ribosomal RNA small subunit methyltransferase H.